Consider the following 150-residue polypeptide: Ubiquitin-conjugating enzyme E2 3 (150 aa).

Residues 4–150 enclose the UBC core domain; the sequence is PAKKRLMWDF…VIEIVEQSYV (147 aa). Cys88 serves as the catalytic Glycyl thioester intermediate.

Belongs to the ubiquitin-conjugating enzyme family. In terms of tissue distribution, expressed in all tissues examined. Lower levels found in leaves.

The catalysed reaction is S-ubiquitinyl-[E1 ubiquitin-activating enzyme]-L-cysteine + [E2 ubiquitin-conjugating enzyme]-L-cysteine = [E1 ubiquitin-activating enzyme]-L-cysteine + S-ubiquitinyl-[E2 ubiquitin-conjugating enzyme]-L-cysteine.. It participates in protein modification; protein ubiquitination. Accepts the ubiquitin from the E1 complex and catalyzes its covalent attachment to other proteins. This chain is Ubiquitin-conjugating enzyme E2 3 (UBC3), found in Arabidopsis thaliana (Mouse-ear cress).